The chain runs to 143 residues: HTH-type transcriptional regulator CueR (143 aa).

An HTH merR-type domain is found at 11–79 (TYRISELAAL…LSDIKDRLEN (69 aa)). The segment at residues 14 to 33 (ISELAALAGVTKRTVDYYTN) is a DNA-binding region (H-T-H motif).

Its function is as follows. Transcriptional activator of the copZA operon. In Bacillus subtilis (strain 168), this protein is HTH-type transcriptional regulator CueR (cueR).